Consider the following 682-residue polypeptide: Heat shock 70 kDa protein 9, mitochondrial (682 aa).

A mitochondrion-targeting transit peptide spans 1 to 46 (MASVALLRSFRRREVQMASVSAFKSVSANGKNSMFGKLGYLARPFC). A disordered region spans residues 640–682 (SKIGEHMSKGSGSSGSDGSSGEGTSGTEQTPEAEFEEASGSRK). Gly residues predominate over residues 651–663 (GSSGSDGSSGEGT).

It belongs to the heat shock protein 70 (TC 1.A.33) family. DnaK subfamily. As to quaternary structure, interacts with HSCB.

It is found in the mitochondrion. It localises to the cytoplasm. The protein localises to the cytosol. Its function is as follows. Chaperone involved in the maturation of iron-sulfur [Fe-S] cluster-containing proteins. Has a low intrinsic ATPase activity which is markedly stimulated by HSCB and ISU1. In cooperation with other chaperones, Hsp70s are key components that facilitate folding of de novo synthesized proteins, assist translocation of precursor proteins into organelles, and are responsible for degradation of damaged protein under stress conditions. The polypeptide is Heat shock 70 kDa protein 9, mitochondrial (Arabidopsis thaliana (Mouse-ear cress)).